A 362-amino-acid polypeptide reads, in one-letter code: Cap-specific mRNA (nucleoside-2'-O-)-methyltransferase 1 (362 aa).

The region spanning 87–294 (SFGNRAGHKL…ERYLVCLGFL (208 aa)) is the RrmJ-type SAM-dependent 2'-O-MTase domain. Positions 130 and 207 each coordinate S-adenosyl-L-methionine. Lysine 248 acts as the Proton acceptor in catalysis.

Its subcellular location is the nucleus. It catalyses the reaction a 5'-end (N(7)-methyl 5'-triphosphoguanosine)-ribonucleoside in mRNA + S-adenosyl-L-methionine = a 5'-end (N(7)-methyl 5'-triphosphoguanosine)-(2'-O-methyl-ribonucleoside) in mRNA + S-adenosyl-L-homocysteine + H(+). S-adenosyl-L-methionine-dependent methyltransferase that mediates RNA cap1 2'-O-ribose methylation to the 5'-cap structure of spliced leader and U1 small nuclear RNAs. Methylates the ribose of the first nucleotide of a m(7)GpppG-capped RNA to produce m(7)GpppNmp (cap1). Cap1 modification is linked to higher levels of translation. Recognizes a guanosine cap on RNA independent of its N(7) methylation status. This Trypanosoma cruzi (strain CL Brener) protein is Cap-specific mRNA (nucleoside-2'-O-)-methyltransferase 1.